Consider the following 177-residue polypeptide: Large ribosomal subunit protein uL6 (177 aa).

It belongs to the universal ribosomal protein uL6 family. In terms of assembly, part of the 50S ribosomal subunit.

In terms of biological role, this protein binds to the 23S rRNA, and is important in its secondary structure. It is located near the subunit interface in the base of the L7/L12 stalk, and near the tRNA binding site of the peptidyltransferase center. The protein is Large ribosomal subunit protein uL6 of Shewanella denitrificans (strain OS217 / ATCC BAA-1090 / DSM 15013).